A 310-amino-acid polypeptide reads, in one-letter code: Methionyl-tRNA formyltransferase (310 aa).

110 to 113 contacts (6S)-5,6,7,8-tetrahydrofolate; that stretch reads SLLP.

This sequence belongs to the Fmt family.

It catalyses the reaction L-methionyl-tRNA(fMet) + (6R)-10-formyltetrahydrofolate = N-formyl-L-methionyl-tRNA(fMet) + (6S)-5,6,7,8-tetrahydrofolate + H(+). Functionally, attaches a formyl group to the free amino group of methionyl-tRNA(fMet). The formyl group appears to play a dual role in the initiator identity of N-formylmethionyl-tRNA by promoting its recognition by IF2 and preventing the misappropriation of this tRNA by the elongation apparatus. The chain is Methionyl-tRNA formyltransferase from Clostridium acetobutylicum (strain ATCC 824 / DSM 792 / JCM 1419 / IAM 19013 / LMG 5710 / NBRC 13948 / NRRL B-527 / VKM B-1787 / 2291 / W).